A 457-amino-acid chain; its full sequence is DNA repair protein RadA (457 aa).

The segment at 10 to 27 adopts a C4-type zinc-finger fold; that stretch reads CQECGYESAKWMGKCPGC. Position 97 to 104 (97 to 104) interacts with ATP; that stretch reads GDPGIGKS. The short motif at 254–258 is the RadA KNRFG motif element; sequence KNRFG. The lon-protease-like stretch occupies residues 353 to 457; the sequence is DAYVNVAGGV…QDALEVTLGR (105 aa).

This sequence belongs to the RecA family. RadA subfamily.

Functionally, DNA-dependent ATPase involved in processing of recombination intermediates, plays a role in repairing DNA breaks. Stimulates the branch migration of RecA-mediated strand transfer reactions, allowing the 3' invading strand to extend heteroduplex DNA faster. Binds ssDNA in the presence of ADP but not other nucleotides, has ATPase activity that is stimulated by ssDNA and various branched DNA structures, but inhibited by SSB. Does not have RecA's homology-searching function. In Halalkalibacterium halodurans (strain ATCC BAA-125 / DSM 18197 / FERM 7344 / JCM 9153 / C-125) (Bacillus halodurans), this protein is DNA repair protein RadA.